A 331-amino-acid polypeptide reads, in one-letter code: Phosphoribosylformylglycinamidine cyclo-ligase (331 aa).

The protein belongs to the AIR synthase family.

The protein localises to the cytoplasm. The enzyme catalyses 2-formamido-N(1)-(5-O-phospho-beta-D-ribosyl)acetamidine + ATP = 5-amino-1-(5-phospho-beta-D-ribosyl)imidazole + ADP + phosphate + H(+). Its pathway is purine metabolism; IMP biosynthesis via de novo pathway; 5-amino-1-(5-phospho-D-ribosyl)imidazole from N(2)-formyl-N(1)-(5-phospho-D-ribosyl)glycinamide: step 2/2. The protein is Phosphoribosylformylglycinamidine cyclo-ligase of Clostridium botulinum (strain 657 / Type Ba4).